The following is a 164-amino-acid chain: Protein SprT (164 aa).

The region spanning 14–156 (QQAETFFKRP…LCRRCREILV (143 aa)) is the SprT-like domain. Zn(2+) is bound at residue His69. Residue Glu70 is part of the active site. His73 serves as a coordination point for Zn(2+).

This sequence belongs to the SprT family. Requires Zn(2+) as cofactor.

The protein localises to the cytoplasm. The protein is Protein SprT of Pseudomonas entomophila (strain L48).